We begin with the raw amino-acid sequence, 181 residues long: Ribonuclease HII (181 aa).

The RNase H type-2 domain occupies 1–181 (MICGIDEVGR…NLHRRSFKFI (181 aa)). A divalent metal cation is bound by residues Asp-6, Glu-7, and Asp-98.

Belongs to the RNase HII family. Mn(2+) is required as a cofactor. It depends on Mg(2+) as a cofactor.

Its subcellular location is the cytoplasm. The enzyme catalyses Endonucleolytic cleavage to 5'-phosphomonoester.. Its function is as follows. Endonuclease that specifically degrades the RNA of RNA-DNA hybrids. This Borrelia hermsii (strain HS1 / DAH) protein is Ribonuclease HII.